A 338-amino-acid polypeptide reads, in one-letter code: Protein UL141 (338 aa).

A signal peptide spans 1-25 (MCRRESLRTLPWLFWVLLSCPRLLE). The Extracellular segment spans residues 37–278 (DIAEKMWAEN…DTGMSPWATR (242 aa)). 3 N-linked (GlcNAc...) asparagine; by host glycosylation sites follow: N117, N132, and N147. A helical membrane pass occupies residues 279–299 (GIAAFLGFWSIFTVCFLCYLC). At 300 to 338 (YLQCCGHWCPTPGRGRRGGEGYRRLPTYDSYPGVKKMKR) the chain is on the cytoplasmic side.

As to quaternary structure, interacts with human PVR. Interacts with human TNFRSF10A and TNFRSF10B. Forms a homodimer that engages two TNFRSF10B monomers.

Its subcellular location is the host endoplasmic reticulum membrane. Evasion of NK cell killing. Blocks surface expression of PVR which is a ligand for NK cell-activating receptors. Binds human PVR in the endoplasmic reticulum and prevents its maturation and transport to the cell surface. Targets also the natural killer cell activating ligand NECTIN2 for proteasome-mediated degradation. Additionally promotes intracellular retention of TNFRSF10A/TRAIL-R1 and TNFRSF10B/TRAIL-R2 and thus down-regulates their cell surface expression. The chain is Protein UL141 (UL141) from Human cytomegalovirus (strain Merlin) (HHV-5).